Consider the following 581-residue polypeptide: Serine/threonine-protein kinase PINK1, mitochondrial (581 aa).

Residues 1–77 (MAVRQALGRG…RFFRQSVAGL (77 aa)) constitute a mitochondrion transit peptide. Residues 78-93 (AARLQRQFVVRAWGCA) are Mitochondrial intermembrane-facing. A helical transmembrane segment spans residues 94–110 (GPCGRAVFLAFGLGLGL). A required for outer membrane localization region spans residues 111–117 (IEEKQAE). Residues 111-581 (IEEKQAESRR…LLLCSWRAAL (471 aa)) are Cytoplasmic-facing. A Protein kinase domain is found at 156–511 (YLIGQSIGKG…VAANVLHLSL (356 aa)). ATP is bound by residues 162-170 (IGKGCSAAV) and Lys-186. The segment at 189 to 208 (GLLPGRGPGTSAPGEGQERA) is disordered. Ser-228 is modified (phosphoserine; by autocatalysis). Residue Asp-362 is the Proton acceptor of the active site. Ser-402 is subject to Phosphoserine; by autocatalysis.

It belongs to the protein kinase superfamily. Ser/Thr protein kinase family. As to quaternary structure, upon mitochondrial depolarization, it forms a supercomplex with TOM and TIM23 complexes. PINK1-TOM-TIM23 supercomplex formation requires PINK1 interaction with TOMM20 and TOMM70 and is critical for PINK1 stabilization at the outer mitochondrial membrane, kinase activation and downstream mitophagy. Upon mitochondrial depolarization, interacts with TIMM23; the interaction is required for PINK1 accumulation at the outer mitochondrial membrane, kinase activation by autophosphorylation and PRKN recruitement to mitochondria. Interacts with PRKN. Interacts with FBXO7. Forms a complex with PRKN and PARK7. Interacts with NENF. Requires Mg(2+) as cofactor. In terms of processing, proteolytically cleaved. In healthy cells, the precursor is continuously imported into the inner mitochondrial membrane (IMM), where it is proteolytically cleaved by mitochondrial-processing peptidase (MPP) and then undergoes further proteolytic cleavage by PARL or AFG3L2 to give rise to the 52 kDa short form. The 52 kDa short form is then released into the cytosol where it rapidly undergoes proteasome-dependent degradation. In unhealthy cells, when cellular stress conditions lead to the loss of mitochondrial membrane potential, mitochondrial import is impaired leading to the precursor accumulating on the outer mitochondrial membrane (OMM). If accumulation at the OMM fails and it is imported into the depolarized mitochondria, it undergoes cleavage by the IMM protease OMA1, promoting its subsequent degradation by the proteasome. Autophosphorylated. Loss of mitochondrial membrane potential results in the precursor accumulating on the outer mitochondrial membrane (OMM) where it is activated by autophosphorylation. Autophosphorylation at Ser-228 and Ser-402 is sufficient and essential for selective recruitment of PRKN to depolarized mitochondria, via PINK1-dependent phosphorylation of ubiquitin and maybe PRKN. In terms of tissue distribution, highly expressed in heart, skeletal muscle and testis, and at lower levels in brain, placenta, liver, kidney, pancreas, prostate, ovary and small intestine. Present in the embryonic testis from an early stage of development.

Its subcellular location is the mitochondrion outer membrane. It is found in the mitochondrion inner membrane. The protein localises to the cytoplasm. The protein resides in the cytosol. It catalyses the reaction L-seryl-[protein] + ATP = O-phospho-L-seryl-[protein] + ADP + H(+). It carries out the reaction L-threonyl-[protein] + ATP = O-phospho-L-threonyl-[protein] + ADP + H(+). Functionally, serine/threonine-protein kinase which acts as a sensor of mitochondrial damage and protects against mitochondrial dysfunction during cellular stress. It phosphorylates mitochondrial proteins to coordinate mitochondrial quality control mechanisms that remove and replace dysfunctional mitochondrial components. Depending on the severity of mitochondrial damage, activity ranges from preventing apoptosis and stimulating mitochondrial biogenesis to eliminating severely damaged mitochondria via PINK1-PRKN-dependent mitophagy. When cellular stress results in irreversible mitochondrial damage, PINK1 accumulates at the outer mitochondrial membrane (OMM) where it phosphorylates pre-existing polyubiquitin chains at 'Ser-65', recruits PRKN from the cytosol to the OMM and activates PRKN by phosphorylation at 'Ser-65'; activated PRKN then ubiquinates VDAC1 and other OMM proteins to initiate mitophagy. The PINK1-PRKN pathway also promotes fission of damaged mitochondria through phosphorylation and PRKN-dependent degradation of mitochondrial proteins involved in fission such as MFN2. This prevents the refusion of unhealthy mitochondria with the mitochondrial network or initiates mitochondrial fragmentation facilitating their later engulfment by autophagosomes. Also promotes mitochondrial fission independently of PRKN and ATG7-mediated mitophagy, via the phosphorylation and activation of DNM1L. Regulates motility of damaged mitochondria by promoting the ubiquitination and subsequent degradation of MIRO1 and MIRO2; in motor neurons, this likely inhibits mitochondrial intracellular anterograde transport along the axons which probably increases the chance of the mitochondria undergoing mitophagy in the soma. Required for ubiquinone reduction by mitochondrial complex I by mediating phosphorylation of complex I subunit NDUFA10. Phosphorylates LETM1, positively regulating its mitochondrial calcium transport activity. The chain is Serine/threonine-protein kinase PINK1, mitochondrial (PINK1) from Homo sapiens (Human).